A 273-amino-acid chain; its full sequence is MRAIWTGSIAFGLVNVPVKVYSATADHDIRFHQVHAKDNGRIRYKRVCEACGEVVDYRDLARAYESGDGQMVAITDDDIASLPEERSREIEVLEFVPAADVDPMMFDRSYFLEPDSKSSKSYVLLAKTLAETDRMAIVHFTLRNKTRLAALRVKDFGKREVMMVHTLLWPDEIRDPDFPVLDQKVEIKPAELKMAGQVVDSMADDFNPDRYHDTYQEQLQELIDTKLEGGQAFTAEDQPRLLDEPEDVSDLLAKLEASVKARSKANSNVPTPP.

Residues 10–193 (AFGLVNVPVK…KVEIKPAELK (184 aa)) enclose the Ku domain. Positions 111–273 (FLEPDSKSSK…KANSNVPTPP (163 aa)) are sufficient for interaction with LigD.

This sequence belongs to the prokaryotic Ku family. As to quaternary structure, homodimer. Interacts with LigD.

In terms of biological role, with LigD forms a non-homologous end joining (NHEJ) DNA repair enzyme, which repairs dsDNA breaks with reduced fidelity. Binds linear dsDNA with 5'- and 3'- overhangs but not closed circular dsDNA nor ssDNA. Recruits and stimulates the ligase activity of LigD. The sequence is that of Non-homologous end joining protein Ku (mku) from Mycobacterium tuberculosis (strain CDC 1551 / Oshkosh).